The following is a 403-amino-acid chain: MAQNKPVKKIVLAYSGGLDTSVILTWLKDTYGCEVIAFTADIGQKEELSGLEEKGIKTGASKVYIQDLRLEFARDFIFPAIQGNAIYEMRYLLGTSLARPLIAKAMVEVAEKEGADAFAHGATGKGNDQVRFELGVKSLAPEKTIIAPWRIWSFGGRSDLIEYAKSKGIPVPVTAEKPYSMDRNLMHISYEGGILEDPYKEPDEKMFLLTTSPEKAPDAPEYLELDFEEGNCVAINGKKMNPLEIMETLNTIAGKHGVGRVDIVENRLVGIKSRGVYETPGGTILFLAHRDLESITIDRDTQHHKDKLSIEFAELIYNGHWFSSRMKAVRAFITETQRYVSGTVRIKLYKGICSVVGRKSQVSLYNPEMATFEKEELYNQKDAEGFINIYGLPAQETARLRKK.

Residues 13 to 21 and alanine 40 each bind ATP; that span reads AYSGGLDTS. L-citrulline contacts are provided by tyrosine 91 and serine 96. ATP is bound at residue glycine 121. L-aspartate-binding residues include threonine 123, asparagine 127, and aspartate 128. L-citrulline is bound at residue asparagine 127. L-citrulline contacts are provided by arginine 131, serine 180, serine 189, glutamate 265, and tyrosine 277.

This sequence belongs to the argininosuccinate synthase family. Type 1 subfamily. In terms of assembly, homotetramer.

The protein localises to the cytoplasm. It carries out the reaction L-citrulline + L-aspartate + ATP = 2-(N(omega)-L-arginino)succinate + AMP + diphosphate + H(+). It functions in the pathway amino-acid biosynthesis; L-arginine biosynthesis; L-arginine from L-ornithine and carbamoyl phosphate: step 2/3. This Leptospira interrogans serogroup Icterohaemorrhagiae serovar copenhageni (strain Fiocruz L1-130) protein is Argininosuccinate synthase.